Consider the following 123-residue polypeptide: UPF0231 protein PMI2039 (123 aa).

Belongs to the UPF0231 family.

The chain is UPF0231 protein PMI2039 from Proteus mirabilis (strain HI4320).